Consider the following 638-residue polypeptide: 1-deoxy-D-xylulose-5-phosphate synthase (638 aa).

Residues histidine 79 and alanine 120–serine 122 contribute to the thiamine diphosphate site. Aspartate 151 contacts Mg(2+). Thiamine diphosphate-binding positions include glycine 152–alanine 153, asparagine 180, tyrosine 289, and glutamate 371. Residue asparagine 180 participates in Mg(2+) binding.

This sequence belongs to the transketolase family. DXPS subfamily. As to quaternary structure, homodimer. It depends on Mg(2+) as a cofactor. Thiamine diphosphate is required as a cofactor.

The catalysed reaction is D-glyceraldehyde 3-phosphate + pyruvate + H(+) = 1-deoxy-D-xylulose 5-phosphate + CO2. It functions in the pathway metabolic intermediate biosynthesis; 1-deoxy-D-xylulose 5-phosphate biosynthesis; 1-deoxy-D-xylulose 5-phosphate from D-glyceraldehyde 3-phosphate and pyruvate: step 1/1. In terms of biological role, catalyzes the acyloin condensation reaction between C atoms 2 and 3 of pyruvate and glyceraldehyde 3-phosphate to yield 1-deoxy-D-xylulose-5-phosphate (DXP). The protein is 1-deoxy-D-xylulose-5-phosphate synthase of Rhizobium leguminosarum bv. trifolii (strain WSM2304).